The primary structure comprises 78 residues: MASVVIRNLSEATHNAIKFRARAAGRSTEAEIRLILDNIAKAQQTVRLGSMLASIGQEIGGVELEDVRGRNTDNEVSL.

As to quaternary structure, homodimer in the absence of FitB; forms a heterodimer with FitB; 4 FitAB heterodimers form a complex that binds to fitAB promoter DNA. The complex is also seen in solution.

In terms of biological role, antitoxin component of a type II toxin-antitoxin (TA) system. Plays a role in the speed with which bacteria traverse human epithelial cells; disruption of the locus increases the speed of trafficking about 2-4-fold. Binds to its own promoter, binding affinity of the FitAB complex is 20-30-fold higher than FitA alone. No nuclease activity was observed for the FitAB complex, perhaps because FitA (the antitoxin) prevents metal binding and thus catalysis by FitB. This is Antitoxin FitA (fitA) from Neisseria gonorrhoeae (strain ATCC 700825 / FA 1090).